A 191-amino-acid polypeptide reads, in one-letter code: Protein YceI (191 aa).

Residues methionine 1–alanine 22 form the signal peptide.

This sequence belongs to the UPF0312 family. Type 1 subfamily.

It localises to the periplasm. This chain is Protein YceI, found in Salmonella dublin (strain CT_02021853).